Reading from the N-terminus, the 438-residue chain is Succinyl-CoA:glutarate CoA-transferase (438 aa).

A mitochondrion-targeting transit peptide spans 1–31 (MLATLARVAALRRTCLFSGRGGGRGLWTGRP). Asp-205 (nucleophile) is an active-site residue. Lys-394 is subject to N6-acetyllysine.

It belongs to the CoA-transferase III family. Highly expressed in kidney. Intermediate expression in liver, skeletal muscle and pancreas. Little to no expression detected in other tissues examined.

Its subcellular location is the mitochondrion. The catalysed reaction is glutarate + succinyl-CoA = glutaryl-CoA + succinate. It catalyses the reaction 3-hydroxy-3-methylglutarate + succinyl-CoA = (3S)-3-hydroxy-3-methylglutaryl-CoA + succinate. It carries out the reaction 3-hydroxy-3-methylglutarate + glutaryl-CoA = (3S)-3-hydroxy-3-methylglutaryl-CoA + glutarate. The enzyme catalyses hexanedioate + glutaryl-CoA = hexanedioyl-CoA + glutarate. The catalysed reaction is itaconate + glutaryl-CoA = itaconyl-CoA + glutarate. It catalyses the reaction itaconate + succinyl-CoA = itaconyl-CoA + succinate. With respect to regulation, inhibited by valsartan and losartan carboxylate. Functionally, coenzyme A (CoA) transferase that reversibly catalyzes the transfer of a CoA moiety from a dicarboxyl-CoA to a dicarboxylate in a metabolite recycling process. Displays preference for succinyl-CoA and glutarate-CoA as dicarboxyl-CoA donors and glutarate, succinate, adipate/hexanedioate, itaconate and 3-hydroxy-3-methylglutarate as dicarboxylate acceptors. Acts on intermediates or end products of lysine and tryptophan degradation pathway, in particular catalyzes succinyl-CoA-dependent reesterification of free glutarate into glutaryl-CoA to prevent renal excretion of glutarate. Upon inflammation, may convert macrophage-derived itaconate to itaconyl-CoA in erythroid precursors where it negatively regulates the TCA cycle and heme synthesis to limit erythroid differentiation in the context of stress erythropoiesis. This Homo sapiens (Human) protein is Succinyl-CoA:glutarate CoA-transferase.